We begin with the raw amino-acid sequence, 196 residues long: MKKMMILSALALFSSSLFAANLTLQKEITPQIVNGEGVTLQEVHNGNRIELKPGHNQIAVTIGQIVFEDGKRRKFDSQPLLLEFVAKPEQALTLEYGKFRTIDDAKKFENNPTVHLTDAQGNPVAFTMVQLYKGGLQGFRDYEREVADYNAQKAQKADSAPLVNHDPKAMDLKTAFKEMTRQEQQAFMQWAMQNLK.

Residues 1–19 (MKKMMILSALALFSSSLFA) form the signal peptide.

This sequence belongs to the UPF0319 family.

This Vibrio vulnificus (strain YJ016) protein is UPF0319 protein VV0948.